A 261-amino-acid chain; its full sequence is Follistatin-related protein 3 (261 aa).

The N-terminal stretch at 1–26 is a signal peptide; it reads MRPRAPGPLWPLPWGALAWAVGFVGS. One can recognise a TB domain in the interval 36–107; that stretch reads GVCWLQQGRE…SCEGVECGPG (72 aa). 8 disulfides stabilise this stretch: Cys38–Cys61, Cys48–Cys92, Cys62–Cys95, Cys99–Cys110, Cys104–Cys119, Cys121–Cys153, Cys125–Cys146, and Cys135–Cys167. Residue Asn73 is glycosylated (N-linked (GlcNAc...) asparagine). The Follistatin-like 1 domain occupies 99–119; it reads CEGVECGPGKACRMLGGRPRC. 2 Kazal-like domains span residues 113 to 169 and 189 to 245; these read LGGR…RCRK and SAHC…SCAG. Residues 170-193 form the Follistatin-like 2 domain; sequence SCAHVVCLRPQSCVVDQTGSAHCV. 3 disulfide bridges follow: Cys195–Cys229, Cys200–Cys222, and Cys211–Cys243. Asn215 carries N-linked (GlcNAc...) asparagine glycosylation. The segment at 242–261 is disordered; that stretch reads SCAGTPEPLDPESEEEENFV. Over residues 250–261 the composition is skewed to acidic residues; sequence LDPESEEEENFV.

In terms of assembly, interacts with INHBA and INHBB. Interacts with FN1. Interacts with ADAM12. Interacts with MLLT10; the interaction enhances MLLT10 in vitro transcriptional activity and self-association. Interacts with MSTN.

The protein resides in the secreted. It is found in the nucleus. Functionally, the secreted form is a binding and antagonizing protein for members of the TGF-beta family, such as activin, BMP2 and MSTN. Inhibits activin A-, activin B-, BMP2- and MSDT-induced cellular signaling; more effective on activin A than on activin B. Involved in bone formation; inhibits osteoclast differentiation. Involved in hematopoiesis; involved in differentiation of hemopoietic progenitor cells, increases hematopoietic cell adhesion to fibronectin and seems to contribute to the adhesion of hematopoietic precursor cells to the bone marrow stroma. The nuclear form is probably involved in transcriptional regulation via interaction with MLLT10. This Bos taurus (Bovine) protein is Follistatin-related protein 3 (FSTL3).